A 189-amino-acid chain; its full sequence is RxLR effector protein CRE18 (189 aa).

The first 23 residues, Met1–Ala23, serve as a signal peptide directing secretion. A RxLR-dEER motif is present at residues Arg47–Arg68.

The protein belongs to the RxLR effector family.

Its subcellular location is the secreted. It is found in the host cytoplasm. The protein localises to the host nucleus. Functionally, effector that is involved in host plant infection. Contributes to virulence during the early infection stage, by inhibiting plant defense responses induced by both PAMP-triggered immunity (PTI) and effector-triggered immunity (ETI). In Phytophthora infestans (strain T30-4) (Potato late blight agent), this protein is RxLR effector protein CRE18.